We begin with the raw amino-acid sequence, 962 residues long: Glycine dehydrogenase (decarboxylating) (962 aa).

N6-(pyridoxal phosphate)lysine is present on K709.

The protein belongs to the GcvP family. The glycine cleavage system is composed of four proteins: P, T, L and H. Requires pyridoxal 5'-phosphate as cofactor.

It catalyses the reaction N(6)-[(R)-lipoyl]-L-lysyl-[glycine-cleavage complex H protein] + glycine + H(+) = N(6)-[(R)-S(8)-aminomethyldihydrolipoyl]-L-lysyl-[glycine-cleavage complex H protein] + CO2. Its function is as follows. The glycine cleavage system catalyzes the degradation of glycine. The P protein binds the alpha-amino group of glycine through its pyridoxal phosphate cofactor; CO(2) is released and the remaining methylamine moiety is then transferred to the lipoamide cofactor of the H protein. The polypeptide is Glycine dehydrogenase (decarboxylating) (Shewanella pealeana (strain ATCC 700345 / ANG-SQ1)).